A 154-amino-acid polypeptide reads, in one-letter code: tRNA-splicing endonuclease (154 aa).

Catalysis depends on residues Tyr-86, His-102, and Lys-133.

This sequence belongs to the tRNA-intron endonuclease family. Archaeal short subfamily. As to quaternary structure, homotetramer; although the tetramer contains four active sites, only two participate in the cleavage. Therefore, it should be considered as a dimer of dimers.

The catalysed reaction is pretRNA = a 3'-half-tRNA molecule with a 5'-OH end + a 5'-half-tRNA molecule with a 2',3'-cyclic phosphate end + an intron with a 2',3'-cyclic phosphate and a 5'-hydroxyl terminus.. Functionally, endonuclease that removes tRNA introns. Cleaves pre-tRNA at the 5'- and 3'-splice sites to release the intron. The products are an intron and two tRNA half-molecules bearing 2',3' cyclic phosphate and 5'-OH termini. Recognizes a pseudosymmetric substrate in which 2 bulged loops of 3 bases are separated by a stem of 4 bp. This chain is tRNA-splicing endonuclease, found in Nanoarchaeum equitans (strain Kin4-M).